A 301-amino-acid polypeptide reads, in one-letter code: MSGFYKGVAAEQETLFTTADKKLMRSTKFPASYDTKVDMKKVNIEVLKPWIATRLNELIGFEDEVVINFVYGMLEEAVEASKTSDSQNESTLDPRKVQLNLTGFLESNATAFTEELWSLIISASQNQYGIPEKFILEKKEEISKLKDRTEASKEESKTVTDHSNRRESRRESTYYDSRERNGKRTSRSTLDRKRFHDASDTERNRYGRSPSPHSRFSEKPRGERYDIRSYSRSHKERYEDRYRPTRRRERHYRTRDDEGFDEFGRSRDGRWRESRTSYREKHRYDRDALSSESDSGTQKHD.

In terms of domain architecture, PWI spans 26–137 (STKFPASYDT…YGIPEKFILE (112 aa)). Residue serine 86 is modified to Phosphoserine. Composition is skewed to basic and acidic residues over residues 145–182 (LKDR…ERNG), 189–205 (TLDR…ERNR), and 215–229 (RFSE…DIRS). A disordered region spans residues 145–301 (LKDRTEASKE…ESDSGTQKHD (157 aa)). At serine 199 the chain carries Phosphoserine. The segment covering 244 to 253 (PTRRRERHYR) has biased composition (basic residues). A compositionally biased stretch (basic and acidic residues) spans 254-289 (TRDDEGFDEFGRSRDGRWRESRTSYREKHRYDRDAL). Over residues 290–301 (SSESDSGTQKHD) the composition is skewed to polar residues. Phosphoserine is present on serine 291.

It is found in the nucleus. This is PWI domain-containing protein C825.05c from Schizosaccharomyces pombe (strain 972 / ATCC 24843) (Fission yeast).